A 614-amino-acid polypeptide reads, in one-letter code: Glucosidase 2 subunit beta (614 aa).

Residues 1–20 (MGLHTLLLLLLLRISASAAA) form the signal peptide. Asn-115 is a glycosylation site (N-linked (GlcNAc...) asparagine). Composition is skewed to basic and acidic residues over residues 194-222 (EEERLRKEKEEKRMKEEAEKQAADEKKAS), 231-272 (QENH…HDPE), and 324-351 (TGEKVDEVSKDDKNEHEAEHDMPEHSEE). The segment at 194–396 (EEERLRKEKE…SHESDDEYVD (203 aa)) is disordered. Positions 352–364 (THEDESDVPESAE) are enriched in acidic residues. The segment covering 372 to 382 (SEVEDDRHKYD) has biased composition (basic and acidic residues). Residues 383–396 (DEDFSHESDDEYVD) are compositionally biased toward acidic residues. The region spanning 497–592 (DQCFESKEGK…VLSTPALCDE (96 aa)) is the MRH domain. Disulfide bonds link Cys-499–Cys-512, Cys-549–Cys-578, and Cys-563–Cys-590.

Heterodimer of a catalytic alpha subunit and a beta subunit.

It is found in the endoplasmic reticulum. The protein operates within glycan metabolism; N-glycan metabolism. Functionally, regulatory subunit of glucosidase II. May be required for defense response elicited by pathogen-associated molecular patterns (PAMPs). In Oryza sativa subsp. indica (Rice), this protein is Glucosidase 2 subunit beta.